The chain runs to 484 residues: UDP-glucose:undecaprenyl-phosphate glucose-1-phosphate transferase (484 aa).

5 helical membrane-spanning segments follow: residues 37–57 (MVVA…VPAA), 59–79 (YRVA…LFPL), 93–113 (VVLG…ALIV), 122–142 (GWVG…RTLL), and 299–319 (ILAV…AVGV).

This sequence belongs to the bacterial sugar transferase family.

The protein resides in the cell inner membrane. The catalysed reaction is di-trans,octa-cis-undecaprenyl phosphate + UDP-alpha-D-glucose = alpha-D-glucosyl di-trans,octa-cis-undecaprenyl diphosphate + UMP. Its pathway is glycan biosynthesis; xanthan biosynthesis. Its function is as follows. Is the initiating enzyme for the synthesis of the exopolysaccharide xanthan. Catalyzes the transfer of the glucose-1-phosphate moiety from UDP-Glc onto the carrier lipid undecaprenyl phosphate (C55-P), forming a phosphoanhydride bond yielding to glucosyl-pyrophosphoryl-undecaprenol (Glc-PP-C55). The protein is UDP-glucose:undecaprenyl-phosphate glucose-1-phosphate transferase (gumD) of Xanthomonas campestris pv. campestris.